Reading from the N-terminus, the 536-residue chain is Membrane protein insertase YidC (536 aa).

5 consecutive transmembrane segments (helical) span residues 3 to 23, 346 to 366, 417 to 437, 454 to 474, and 494 to 514; these read LQRN…WKTW, ICGN…GITF, GGCF…YMLI, LSDQ…MFFI, and IPIL…LYYL.

The protein belongs to the OXA1/ALB3/YidC family. Type 1 subfamily. Interacts with the Sec translocase complex via SecD. Specifically interacts with transmembrane segments of nascent integral membrane proteins during membrane integration.

The protein localises to the cell membrane. In terms of biological role, required for the insertion and/or proper folding and/or complex formation of integral membrane proteins into the membrane. Involved in integration of membrane proteins that insert both dependently and independently of the Sec translocase complex, as well as at least some lipoproteins. Aids folding of multispanning membrane proteins. This chain is Membrane protein insertase YidC, found in Buchnera aphidicola subsp. Baizongia pistaciae (strain Bp).